Reading from the N-terminus, the 876-residue chain is ATPase WRNIP1 (876 aa).

Composition is skewed to low complexity over residues 56 to 85 (NKSN…TPTK) and 104 to 175 (NNNN…INNN). The interval 56–175 (NKSNGNNSIN…NNNNNNINNN (120 aa)) is disordered. Position 240–246 (240–246 (PGCGKTT)) interacts with ATP. Disordered stretches follow at residues 621-647 (KDRQ…PQQQ), 714-737 (INNK…LNPT), and 833-876 (ETKA…SLDF). Low complexity-rich tracts occupy residues 626 to 647 (SQDQ…PQQQ) and 714 to 731 (INNK…VNNS). Residues 835-849 (KAISSTDTKESVSIN) show a composition bias toward polar residues. Over residues 850 to 863 (DSDKDLTTTHKNEQ) the composition is skewed to basic and acidic residues.

This sequence belongs to the AAA ATPase family. RarA/MGS1/WRNIP1 subfamily.

Its subcellular location is the nucleus. The catalysed reaction is ATP + H2O = ADP + phosphate + H(+). Functionally, functions as a modulator for initiation or reinitiation events during DNA polymerase delta-mediated DNA synthesis. Has an intrinsic ATPase activity that functions as a sensor of DNA damage or of arrested replication forks and regulates the extent of DNA synthesis. The sequence is that of ATPase WRNIP1 from Dictyostelium discoideum (Social amoeba).